We begin with the raw amino-acid sequence, 288 residues long: Polyamine aminopropyltransferase (288 aa).

Positions 9–238 (ETLHDQFGQY…GIMTFAWATD (230 aa)) constitute a PABS domain. Q33 serves as a coordination point for S-methyl-5'-thioadenosine. Positions 64 and 88 each coordinate spermidine. S-methyl-5'-thioadenosine contacts are provided by residues E108 and 140–141 (DG). The Proton acceptor role is filled by D158. Residue 158 to 161 (DCTD) participates in spermidine binding. An S-methyl-5'-thioadenosine-binding site is contributed by P165.

The protein belongs to the spermidine/spermine synthase family. As to quaternary structure, homodimer or homotetramer.

It localises to the cytoplasm. It carries out the reaction S-adenosyl 3-(methylsulfanyl)propylamine + putrescine = S-methyl-5'-thioadenosine + spermidine + H(+). It participates in amine and polyamine biosynthesis; spermidine biosynthesis; spermidine from putrescine: step 1/1. Its function is as follows. Catalyzes the irreversible transfer of a propylamine group from the amino donor S-adenosylmethioninamine (decarboxy-AdoMet) to putrescine (1,4-diaminobutane) to yield spermidine. In Escherichia coli O17:K52:H18 (strain UMN026 / ExPEC), this protein is Polyamine aminopropyltransferase.